The following is a 311-amino-acid chain: GTP cyclohydrolase FolE2 (311 aa).

It belongs to the GTP cyclohydrolase IV family.

It catalyses the reaction GTP + H2O = 7,8-dihydroneopterin 3'-triphosphate + formate + H(+). Its pathway is cofactor biosynthesis; 7,8-dihydroneopterin triphosphate biosynthesis; 7,8-dihydroneopterin triphosphate from GTP: step 1/1. In terms of biological role, converts GTP to 7,8-dihydroneopterin triphosphate. In Xanthomonas campestris pv. campestris (strain B100), this protein is GTP cyclohydrolase FolE2.